The chain runs to 138 residues: Envelope glycoprotein N (138 aa).

The N-terminal stretch at 1 to 21 is a signal peptide; the sequence is MEWNTLVLGLLVLSVVAESSG. The Virion surface segment spans residues 22–101; sequence NNSSTSTSAT…SHMYELSLSS (80 aa). A helical membrane pass occupies residues 102–122; that stretch reads FAAWWTMLNALILMGAFCIVL. Topologically, residues 123-138 are intravirion; it reads RHCCFQNFTATTTKGY.

This sequence belongs to the herpesviridae glycoprotein N family. Interacts (via N-terminus) with gM (via N-terminus). The gM-gN heterodimer forms the gCII complex. O-glycosylated.

It localises to the virion membrane. It is found in the host membrane. The protein resides in the host Golgi apparatus. Its subcellular location is the host trans-Golgi network. Its function is as follows. Envelope glycoprotein necessary for proper maturation of gM and modulation of its membrane fusion activity. Also plays a critical role in virion morphogenesis. In Human cytomegalovirus (strain AD169) (HHV-5), this protein is Envelope glycoprotein N.